The chain runs to 205 residues: Glycerol-3-phosphate acyltransferase (205 aa).

6 consecutive transmembrane segments (helical) span residues 8–28, 57–77, 84–104, 118–138, 143–163, and 164–184; these read IALF…GYLA, TPAL…ILIA, ESLQ…PVWL, VFLG…LLIL, IVSL…LINS, and KETF…LVLW.

Belongs to the PlsY family. As to quaternary structure, probably interacts with PlsX.

The protein localises to the cell inner membrane. The catalysed reaction is an acyl phosphate + sn-glycerol 3-phosphate = a 1-acyl-sn-glycero-3-phosphate + phosphate. It functions in the pathway lipid metabolism; phospholipid metabolism. Its function is as follows. Catalyzes the transfer of an acyl group from acyl-phosphate (acyl-PO(4)) to glycerol-3-phosphate (G3P) to form lysophosphatidic acid (LPA). This enzyme utilizes acyl-phosphate as fatty acyl donor, but not acyl-CoA or acyl-ACP. The chain is Glycerol-3-phosphate acyltransferase from Prochlorococcus marinus (strain SARG / CCMP1375 / SS120).